We begin with the raw amino-acid sequence, 226 residues long: Lipoprotein-releasing system ATP-binding protein LolD (226 aa).

The 222-residue stretch at leucine 5–serine 226 folds into the ABC transporter domain. Glycine 41–serine 48 lines the ATP pocket.

The protein belongs to the ABC transporter superfamily. Lipoprotein translocase (TC 3.A.1.125) family. The complex is composed of two ATP-binding proteins (LolD) and two transmembrane proteins (LolC and LolE).

It is found in the cell inner membrane. Its function is as follows. Part of the ABC transporter complex LolCDE involved in the translocation of mature outer membrane-directed lipoproteins, from the inner membrane to the periplasmic chaperone, LolA. Responsible for the formation of the LolA-lipoprotein complex in an ATP-dependent manner. This is Lipoprotein-releasing system ATP-binding protein LolD from Haemophilus ducreyi (strain 35000HP / ATCC 700724).